The following is a 302-amino-acid chain: uncharacterized protein (302 aa).

The 72-residue stretch at 19–90 (QWLFSVLKTA…GELDILFEDN (72 aa)) folds into the S4 RNA-binding domain. The active site involves Asp-138. A disordered region spans residues 182-205 (KGTINSPIGRDRSHPTRRRVSPGG).

Belongs to the pseudouridine synthase RluA family.

It catalyses the reaction a uridine in RNA = a pseudouridine in RNA. This is an uncharacterized protein from Bacillus subtilis (strain 168).